The following is a 108-amino-acid chain: Large ribosomal subunit protein uL23 (108 aa).

It belongs to the universal ribosomal protein uL23 family. As to quaternary structure, part of the 50S ribosomal subunit. Contacts protein L29, and trigger factor when it is bound to the ribosome.

Functionally, one of the early assembly proteins it binds 23S rRNA. One of the proteins that surrounds the polypeptide exit tunnel on the outside of the ribosome. Forms the main docking site for trigger factor binding to the ribosome. The protein is Large ribosomal subunit protein uL23 of Albidiferax ferrireducens (strain ATCC BAA-621 / DSM 15236 / T118) (Rhodoferax ferrireducens).